Here is a 54-residue protein sequence, read N- to C-terminus: Large ribosomal subunit protein bL33 (54 aa).

The protein belongs to the bacterial ribosomal protein bL33 family.

This chain is Large ribosomal subunit protein bL33, found in Buchnera aphidicola subsp. Cinara cedri (strain Cc).